A 564-amino-acid chain; its full sequence is 60 kDa lysophospholipase (564 aa).

Residues 9-355 (RRLLAIYTGG…NDRKKLLAKD (347 aa)) enclose the Asparaginase/glutaminase domain. The Acyl-ester intermediate role is filled by T19. The tract at residues 41 to 350 (TLHMFHDEEY…PGLSLNDRKK (310 aa)) is asparaginase. Residues 84–86 (DSS) and 116–117 (TD) contribute to the substrate site. 5 ANK repeats span residues 141-170 (GAQVPIHALWSDGRENLLGALLMAGQYVIP), 396-426 (VLLPGLALAAAHAGDLDTLQAFVELDRDLNL), 430-459 (SGQTPLHVAARRGHAAVVTMLLQRGADVDA), 463-492 (DGQSPLLLAVRGRHQSVIGLLRAAGARLSP), and 530-559 (DGHCALQVAEAAGNADVVALLQSFKDSVCA). Position 478 is a phosphoserine (S478).

It in the N-terminal section; belongs to the asparaginase 1 family. As to quaternary structure, monomer.

It catalyses the reaction a 1-acyl-sn-glycero-3-phosphocholine + H2O = sn-glycerol 3-phosphocholine + a fatty acid + H(+). It carries out the reaction L-asparagine + H2O = L-aspartate + NH4(+). The catalysed reaction is a 1-O-alkyl-2-acetyl-sn-glycero-3-phosphocholine + H2O = a 1-O-alkyl-sn-glycero-3-phosphocholine + acetate + H(+). The enzyme catalyses 1-hexadecanoyl-sn-glycero-3-phosphocholine + H2O = sn-glycerol 3-phosphocholine + hexadecanoate + H(+). It catalyses the reaction 2 1-hexadecanoyl-sn-glycero-3-phosphocholine = 1,2-dihexadecanoyl-sn-glycero-3-phosphocholine + sn-glycerol 3-phosphocholine. It carries out the reaction 1-octadecanoyl-sn-glycero-3-phosphocholine + H2O = octadecanoate + sn-glycerol 3-phosphocholine + H(+). The catalysed reaction is 1-(9Z-octadecenoyl)-sn-glycero-3-phosphocholine + H2O = sn-glycerol 3-phosphocholine + (9Z)-octadecenoate + H(+). The enzyme catalyses 1-hexadecanoyl-sn-glycero-3-phosphoethanolamine + H2O = sn-glycero-3-phosphoethanolamine + hexadecanoate + H(+). It catalyses the reaction 1-(9Z-octadecenoyl)-sn-glycero-3-phosphoethanolamine + H2O = sn-glycero-3-phosphoethanolamine + (9Z)-octadecenoate + H(+). It carries out the reaction 1-hexadecanoyl-sn-glycero-3-phosphoethanolamine + 1-hexadecanoyl-sn-glycero-3-phosphocholine = 1,2-dihexadecanoyl-sn-glycero-3-phosphoethanolamine + sn-glycerol 3-phosphocholine. The catalysed reaction is 2-(5Z,8Z,11Z,14Z)-eicosatetraenoyl-sn-glycero-3-phosphocholine + H2O = sn-glycerol 3-phosphocholine + (5Z,8Z,11Z,14Z)-eicosatetraenoate + H(+). The enzyme catalyses 2-hexadecanoyl-sn-glycero-3-phosphocholine + H2O = sn-glycerol 3-phosphocholine + hexadecanoate + H(+). It catalyses the reaction 2 2-hexadecanoyl-sn-glycero-3-phosphocholine = 1,2-dihexadecanoyl-sn-glycero-3-phosphocholine + sn-glycerol 3-phosphocholine. It carries out the reaction 1-O-(9Z)-octadecenoyl-2-O-acetyl-sn-glycero-3-phosphocholine + H2O = 2-acetyl-sn-glycero-3-phosphocholine + (9Z)-octadecenoate + H(+). The catalysed reaction is a 1-acyl-sn-glycero-3-phospho-(1D-myo-inositol) + 1-hexadecanoyl-sn-glycero-3-phosphocholine = a 1-acyl-2-hexadecanoyl-sn-glycero-3-phospho-(1D-myo-inositol) + sn-glycerol 3-phosphocholine. The enzyme catalyses 2 2-(5Z,8Z,11Z,14Z)-eicosatetraenoyl-sn-glycero-3-phosphocholine = 1,2-di-(5Z,8Z,11Z,14Z-eicosatetraenoyl)-sn-glycero-3-phosphocholine + sn-glycerol 3-phosphocholine. In terms of biological role, exhibits lysophospholipase, transacylase, PAF acetylhydrolase and asparaginase activities. Can catalyze three types of transacylation reactions: (1) acyl transfer from 1-acyl-sn-glycero-3-phosphocholine (1-acyl-GPC) to the sn-1(3) positions of glycerol and 2-acylglycerol (sn-1 to -1(3) transfer), (2) acyl transfer from 1-acyl-GPC to the sn-2 positions of 1-acyl-GPC, 1-acyl-sn-glycero-3-phosphoethanolamine (1-acyl-GPE), and other lysophospholipids (sn-1 to -2 transfer) and (3) acyl transfer from 2-acyl-GPC to the sn-1 position of 2-acyl-GPC and 2-acyl-GPE (sn-2 to -1 transfer). Mediates the synthesis of 1-arachidonoyl species of phospholipids by transferring the arachidonoyl residue from 2-arachidonoyl lysophospholipid to the sn-1 position of 2-acyl lysophospholipid. This chain is 60 kDa lysophospholipase (Aspg), found in Mus musculus (Mouse).